Here is a 258-residue protein sequence, read N- to C-terminus: Imidazole glycerol phosphate synthase subunit HisF (258 aa).

Active-site residues include D11 and D130.

Belongs to the HisA/HisF family. In terms of assembly, heterodimer of HisH and HisF.

The protein resides in the cytoplasm. The catalysed reaction is 5-[(5-phospho-1-deoxy-D-ribulos-1-ylimino)methylamino]-1-(5-phospho-beta-D-ribosyl)imidazole-4-carboxamide + L-glutamine = D-erythro-1-(imidazol-4-yl)glycerol 3-phosphate + 5-amino-1-(5-phospho-beta-D-ribosyl)imidazole-4-carboxamide + L-glutamate + H(+). Its pathway is amino-acid biosynthesis; L-histidine biosynthesis; L-histidine from 5-phospho-alpha-D-ribose 1-diphosphate: step 5/9. IGPS catalyzes the conversion of PRFAR and glutamine to IGP, AICAR and glutamate. The HisF subunit catalyzes the cyclization activity that produces IGP and AICAR from PRFAR using the ammonia provided by the HisH subunit. The protein is Imidazole glycerol phosphate synthase subunit HisF of Azorhizobium caulinodans (strain ATCC 43989 / DSM 5975 / JCM 20966 / LMG 6465 / NBRC 14845 / NCIMB 13405 / ORS 571).